We begin with the raw amino-acid sequence, 188 residues long: UPF0340 protein GK3370 (188 aa).

Belongs to the UPF0340 family.

The protein is UPF0340 protein GK3370 of Geobacillus kaustophilus (strain HTA426).